A 483-amino-acid polypeptide reads, in one-letter code: UDP-glycosyltransferase 85C1 (483 aa).

Residues serine 304, 360–361 (WC), 378–386 (HCGWGSIIE), and 400–403 (IGDQ) each bind UDP-alpha-D-glucose.

It belongs to the UDP-glycosyltransferase family.

Functionally, may glycosylate diterpenes or flavonols in leaves. The polypeptide is UDP-glycosyltransferase 85C1 (Stevia rebaudiana (Stevia)).